The chain runs to 354 residues: N-acetyl-gamma-glutamyl-phosphate reductase (354 aa).

Cysteine 156 is a catalytic residue.

This sequence belongs to the NAGSA dehydrogenase family. Type 1 subfamily.

It is found in the cytoplasm. The enzyme catalyses N-acetyl-L-glutamate 5-semialdehyde + phosphate + NADP(+) = N-acetyl-L-glutamyl 5-phosphate + NADPH + H(+). It functions in the pathway amino-acid biosynthesis; L-arginine biosynthesis; N(2)-acetyl-L-ornithine from L-glutamate: step 3/4. Catalyzes the NADPH-dependent reduction of N-acetyl-5-glutamyl phosphate to yield N-acetyl-L-glutamate 5-semialdehyde. In Bordetella pertussis (strain Tohama I / ATCC BAA-589 / NCTC 13251), this protein is N-acetyl-gamma-glutamyl-phosphate reductase.